Consider the following 430-residue polypeptide: Histidine--tRNA ligase, chloroplastic (430 aa).

It belongs to the class-II aminoacyl-tRNA synthetase family.

Its subcellular location is the plastid. It localises to the chloroplast. The enzyme catalyses tRNA(His) + L-histidine + ATP = L-histidyl-tRNA(His) + AMP + diphosphate + H(+). In Porphyra purpurea (Red seaweed), this protein is Histidine--tRNA ligase, chloroplastic (hisS).